A 224-amino-acid polypeptide reads, in one-letter code: Glutathione peroxidase 3 (224 aa).

The N-terminal stretch at 1-18 (MAPGSVLSLAVALATIIG) is a signal peptide. Residue Asn38 is glycosylated (N-linked (GlcNAc...) asparagine). Residue Cys73 is part of the active site.

Belongs to the glutathione peroxidase family.

Its subcellular location is the secreted. The protein localises to the extracellular space. It carries out the reaction 2 glutathione + H2O2 = glutathione disulfide + 2 H2O. This Caenorhabditis elegans protein is Glutathione peroxidase 3 (gpx-3).